The primary structure comprises 894 residues: Bifunctional glutamine synthetase adenylyltransferase/adenylyl-removing enzyme (894 aa).

The tract at residues 1 to 410 is adenylyl removase; that stretch reads MPANTSAAIA…HFEQVFILPS (410 aa). An adenylyl transferase region spans residues 415 to 894; sequence SHPLSELWLD…QVFEQALDFS (480 aa).

The protein belongs to the GlnE family. It depends on Mg(2+) as a cofactor.

The enzyme catalyses [glutamine synthetase]-O(4)-(5'-adenylyl)-L-tyrosine + phosphate = [glutamine synthetase]-L-tyrosine + ADP. The catalysed reaction is [glutamine synthetase]-L-tyrosine + ATP = [glutamine synthetase]-O(4)-(5'-adenylyl)-L-tyrosine + diphosphate. In terms of biological role, involved in the regulation of glutamine synthetase GlnA, a key enzyme in the process to assimilate ammonia. When cellular nitrogen levels are high, the C-terminal adenylyl transferase (AT) inactivates GlnA by covalent transfer of an adenylyl group from ATP to specific tyrosine residue of GlnA, thus reducing its activity. Conversely, when nitrogen levels are low, the N-terminal adenylyl removase (AR) activates GlnA by removing the adenylyl group by phosphorolysis, increasing its activity. The regulatory region of GlnE binds the signal transduction protein PII (GlnB) which indicates the nitrogen status of the cell. The polypeptide is Bifunctional glutamine synthetase adenylyltransferase/adenylyl-removing enzyme (Chromobacterium violaceum (strain ATCC 12472 / DSM 30191 / JCM 1249 / CCUG 213 / NBRC 12614 / NCIMB 9131 / NCTC 9757 / MK)).